The sequence spans 148 residues: Transcriptional regulator MraZ (148 aa).

SpoVT-AbrB domains are found at residues 5-51 and 80-123; these read STQL…PQPV and ACDV…DMAK.

It belongs to the MraZ family. As to quaternary structure, forms oligomers.

Its subcellular location is the cytoplasm. The protein resides in the nucleoid. The chain is Transcriptional regulator MraZ from Nitrosomonas eutropha (strain DSM 101675 / C91 / Nm57).